A 493-amino-acid polypeptide reads, in one-letter code: Glutamyl-tRNA(Gln) amidotransferase subunit A (493 aa).

Residues Lys79 and Ser159 each act as charge relay system in the active site. The Acyl-ester intermediate role is filled by Ser183.

Belongs to the amidase family. GatA subfamily. In terms of assembly, heterotrimer of A, B and C subunits.

The catalysed reaction is L-glutamyl-tRNA(Gln) + L-glutamine + ATP + H2O = L-glutaminyl-tRNA(Gln) + L-glutamate + ADP + phosphate + H(+). Its function is as follows. Allows the formation of correctly charged Gln-tRNA(Gln) through the transamidation of misacylated Glu-tRNA(Gln) in organisms which lack glutaminyl-tRNA synthetase. The reaction takes place in the presence of glutamine and ATP through an activated gamma-phospho-Glu-tRNA(Gln). This Rhizobium johnstonii (strain DSM 114642 / LMG 32736 / 3841) (Rhizobium leguminosarum bv. viciae) protein is Glutamyl-tRNA(Gln) amidotransferase subunit A.